A 559-amino-acid chain; its full sequence is Poly [ADP-ribose] polymerase 2 (559 aa).

A disordered region spans residues Met-1 to Asp-58. Positions Met-1–Gly-83 are N-terminal region (NTR). The span at Val-14–Glu-29 shows a compositional bias: basic and acidic residues. Short sequence motifs (nuclear localization signal) lie at residues Lys-19 to Lys-20 and Pro-33 to Arg-39. N6-(ADP-ribosyl)lysine; alternate is present on residues Lys-36 and Lys-37. Lys-36 and Lys-37 each carry N6-acetyllysine; alternate. Residues Lys-84 to Tyr-181 enclose the WGR domain. Positions Glu-207–Lys-324 constitute a PARP alpha-helical domain. Position 208 is a phosphoserine (Ser-208). A PARP catalytic domain is found at His-332–Trp-559. NAD(+) is bound by residues His-404–Ser-406, Gly-413, Arg-420, and Ser-446. Glu-534 functions as the For poly [ADP-ribose] polymerase activity in the catalytic mechanism.

Belongs to the ARTD/PARP family. As to quaternary structure, component of a base excision repair (BER) complex, containing at least XRCC1, PARP1, POLB and LRIG3. Homo- and heterodimer with PARP1. Interacts (via the PARP catalytic domain) with HPF1. Interacts with core nucleosomes. Auto poly-ADP-ribosylated on serine residues, leading to dissociation of the PARP2-HPF1 complex from chromatin. Poly-ADP-ribosylated by PARP1. Post-translationally, acetylation reduces DNA binding and enzymatic activity. In terms of processing, proteolytically cleaved by caspase-8 (CASP8) in response to apoptosis, leading to its inactivation. Widely expressed; the highest levels were in testis followed by ovary. Expression is correlated with proliferation, with higher levels occurring during early fetal development and organogenesis and in the highly proliferative cell compartments of adult.

It is found in the nucleus. The protein resides in the chromosome. The enzyme catalyses NAD(+) + (ADP-D-ribosyl)n-acceptor = nicotinamide + (ADP-D-ribosyl)n+1-acceptor + H(+).. The catalysed reaction is L-seryl-[protein] + NAD(+) = O-(ADP-D-ribosyl)-L-seryl-[protein] + nicotinamide + H(+). It carries out the reaction L-aspartyl-[protein] + NAD(+) = 4-O-(ADP-D-ribosyl)-L-aspartyl-[protein] + nicotinamide. It catalyses the reaction L-glutamyl-[protein] + NAD(+) = 5-O-(ADP-D-ribosyl)-L-glutamyl-[protein] + nicotinamide. ADP-ribosyltransferase activity is regulated via an allosteric activation mechanism. In absence of activation signal, PARP2 is autoinhibited by the PARP alpha-helical domain (also named HD region), which prevents effective NAD(+)-binding. Activity is highly stimulated by signals, which unfold the PARP alpha-helical domain, relieving autoinhibition. Poly-ADP-ribosyltransferase activity is tightly regulated and PARP2 is removed from damaged chromatin following initial poly-ADP-ribosylation of chromatin to avoid prolonged residence (trapping) that has cytotoxic consequences. CHD1L promotes PARP2 removal from chromatin. Poly-ADP-ribosyltransferase that mediates poly-ADP-ribosylation of proteins and plays a key role in DNA repair. Mediates glutamate, aspartate or serine ADP-ribosylation of proteins: the ADP-D-ribosyl group of NAD(+) is transferred to the acceptor carboxyl group of target residues and further ADP-ribosyl groups are transferred to the 2'-position of the terminal adenosine moiety, building up a polymer with an average chain length of 20-30 units. Serine ADP-ribosylation of proteins constitutes the primary form of ADP-ribosylation of proteins in response to DNA damage. Mediates glutamate and aspartate ADP-ribosylation of target proteins in absence of HPF1. Following interaction with HPF1, catalyzes serine ADP-ribosylation of target proteins; HPF1 conferring serine specificity by completing the PARP2 active site. PARP2 initiates the repair of double-strand DNA breaks: recognizes and binds DNA breaks within chromatin and recruits HPF1, licensing serine ADP-ribosylation of target proteins, such as histones, thereby promoting decompaction of chromatin and the recruitment of repair factors leading to the reparation of DNA strand breaks. HPF1 initiates serine ADP-ribosylation but restricts the polymerase activity of PARP2 in order to limit the length of poly-ADP-ribose chains. Specifically mediates formation of branched poly-ADP-ribosylation. Branched poly-ADP-ribose chains are specifically recognized by some factors, such as APLF. In addition to proteins, also able to ADP-ribosylate DNA: preferentially acts on 5'-terminal phosphates at DNA strand breaks termini in nicked duplex. The protein is Poly [ADP-ribose] polymerase 2 (Parp2) of Mus musculus (Mouse).